Consider the following 132-residue polypeptide: L-ectoine synthase (132 aa).

Belongs to the ectoine synthase family.

It carries out the reaction (2S)-4-acetamido-2-aminobutanoate = L-ectoine + H2O. It functions in the pathway amine and polyamine biosynthesis; ectoine biosynthesis; L-ectoine from L-aspartate 4-semialdehyde: step 3/3. Its function is as follows. Catalyzes the circularization of gamma-N-acetyl-alpha,gamma-diaminobutyric acid (ADABA) to ectoine (1,4,5,6-tetrahydro-2-methyl-4-pyrimidine carboxylic acid), which is an excellent osmoprotectant. The chain is L-ectoine synthase from Saccharophagus degradans (strain 2-40 / ATCC 43961 / DSM 17024).